Reading from the N-terminus, the 83-residue chain is Cell division topological specificity factor (83 aa).

Belongs to the MinE family.

Its function is as follows. Prevents the cell division inhibition by proteins MinC and MinD at internal division sites while permitting inhibition at polar sites. This ensures cell division at the proper site by restricting the formation of a division septum at the midpoint of the long axis of the cell. This chain is Cell division topological specificity factor, found in Bordetella parapertussis (strain 12822 / ATCC BAA-587 / NCTC 13253).